The following is a 388-amino-acid chain: Fetuin-B (388 aa).

The first 18 residues, 1–18, serve as a signal peptide directing secretion; it reads MGLLRLLVLCTLAACCMA. Cystatin fetuin-B-type domains are found at residues 28 to 141 and 152 to 264; these read QRPL…YNCT and TTCP…VTCE. N-linked (GlcNAc...) asparagine glycosylation is present at N40. 5 cysteine pairs are disulfide-bonded: C96–C107, C120–C140, C154–C157, C217–C224, and C237–C263. N139 is a glycosylation site (N-linked (GlcNAc...) asparagine). 2 disordered regions span residues 270–343 and 367–388; these read AQVP…PQGD and KEQR…VLPP. Polar residues predominate over residues 279 to 300; sequence AVTQGPQKLPQKNTAPTSSPSV. T292 and T295 each carry an O-linked (GalNAc...) threonine glycan. S321 is subject to Phosphoserine. Residues 367–381 show a composition bias toward basic and acidic residues; that stretch reads KEQRSAECPGPEKEN.

This sequence belongs to the fetuin family. Liver, lung and tongue.

It localises to the secreted. Functionally, protease inhibitor required for egg fertilization. Required to prevent premature zona pellucida hardening before fertilization, probably by inhibiting the protease activity of ASTL, a protease that mediates the cleavage of ZP2 and triggers zona pellucida hardening. This Mus musculus (Mouse) protein is Fetuin-B (Fetub).